The following is a 327-amino-acid chain: Methionyl-tRNA formyltransferase (327 aa).

118–121 (SLLP) serves as a coordination point for (6S)-5,6,7,8-tetrahydrofolate.

This sequence belongs to the Fmt family.

It catalyses the reaction L-methionyl-tRNA(fMet) + (6R)-10-formyltetrahydrofolate = N-formyl-L-methionyl-tRNA(fMet) + (6S)-5,6,7,8-tetrahydrofolate + H(+). In terms of biological role, attaches a formyl group to the free amino group of methionyl-tRNA(fMet). The formyl group appears to play a dual role in the initiator identity of N-formylmethionyl-tRNA by promoting its recognition by IF2 and preventing the misappropriation of this tRNA by the elongation apparatus. This Corynebacterium jeikeium (strain K411) protein is Methionyl-tRNA formyltransferase.